Reading from the N-terminus, the 237-residue chain is Ribosomal RNA small subunit methyltransferase G (237 aa).

Residues G78, F83, 129–130 (AE), and R148 each bind S-adenosyl-L-methionine.

The protein belongs to the methyltransferase superfamily. RNA methyltransferase RsmG family.

Its subcellular location is the cytoplasm. In terms of biological role, specifically methylates the N7 position of a guanine in 16S rRNA. In Streptococcus pyogenes serotype M4 (strain MGAS10750), this protein is Ribosomal RNA small subunit methyltransferase G.